The sequence spans 334 residues: Phosphate acyltransferase (334 aa).

It belongs to the PlsX family. In terms of assembly, homodimer. Probably interacts with PlsY.

The protein localises to the cytoplasm. The catalysed reaction is a fatty acyl-[ACP] + phosphate = an acyl phosphate + holo-[ACP]. It participates in lipid metabolism; phospholipid metabolism. Catalyzes the reversible formation of acyl-phosphate (acyl-PO(4)) from acyl-[acyl-carrier-protein] (acyl-ACP). This enzyme utilizes acyl-ACP as fatty acyl donor, but not acyl-CoA. This Fervidobacterium nodosum (strain ATCC 35602 / DSM 5306 / Rt17-B1) protein is Phosphate acyltransferase.